A 428-amino-acid chain; its full sequence is Cell division protein FtsZ (428 aa).

GTP contacts are provided by residues 73–77 (GGGGN), 160–162 (GTG), E191, R195, and D239. Positions 378–428 (NAANARVVSAPPKRTPTQTPLTNSPAPTPEPKEKSGLDIPDFLQRRRPPKN) are disordered. Residues 392–402 (TPTQTPLTNSP) are compositionally biased toward polar residues.

It belongs to the FtsZ family. As to quaternary structure, homodimer. Polymerizes to form a dynamic ring structure in a strictly GTP-dependent manner. Interacts directly with several other division proteins.

The protein resides in the cytoplasm. Essential cell division protein that forms a contractile ring structure (Z ring) at the future cell division site. The regulation of the ring assembly controls the timing and the location of cell division. One of the functions of the FtsZ ring is to recruit other cell division proteins to the septum to produce a new cell wall between the dividing cells. Binds GTP and shows GTPase activity. In Nostoc sp. (strain PCC 7120 / SAG 25.82 / UTEX 2576), this protein is Cell division protein FtsZ.